Reading from the N-terminus, the 635-residue chain is Dual specificity protein kinase zak2 (635 aa).

Protein kinase domains are found at residues 9–249 (WEEI…HRLI) and 299–585 (NKDD…QIYF). ATP-binding positions include 15–23 (IGSCNSKSR) and K45. Residue D124 is the Proton acceptor of the active site. Residues 305-313 (GGDGFFSVV) and K326 contribute to the ATP site. D427 (proton acceptor) is an active-site residue.

It in the N-terminal section; belongs to the protein kinase superfamily. Ser/Thr protein kinase family. In the C-terminal section; belongs to the protein kinase superfamily. TKL Tyr protein kinase family. C-terminal tyrosine kinase domain is capable of autophosphorylation, in vitro. ZakA and zak2 are coexpressed in prestalk cell population, zakA is enriched in pstB populations and zak1 in pstA populations. ZakA and zak2 are coexpressed in prespore cells, zakA expression levels are 10 fold higher than zak2.

The enzyme catalyses L-seryl-[protein] + ATP = O-phospho-L-seryl-[protein] + ADP + H(+). It catalyses the reaction L-threonyl-[protein] + ATP = O-phospho-L-threonyl-[protein] + ADP + H(+). It carries out the reaction L-tyrosyl-[protein] + ATP = O-phospho-L-tyrosyl-[protein] + ADP + H(+). Functionally, positive regulator of gsk3/gskA activity required for cell pattern formation and a downstream effector of carC. The kinases, gsk3/gskA, zakA and zak2, form part of a signaling pathway that responds to extracellular cyclic AMP. The pathway has a role in transcriptional regulation; required to direct prespore/spore fates during development. Zak2 negatively regulates prestalk differentiation by regulating expression of ecmA. Phosphorylates Y-214 of gsk3/gskA, in vitro. In Dictyostelium discoideum (Social amoeba), this protein is Dual specificity protein kinase zak2 (zak2).